A 603-amino-acid chain; its full sequence is Isocitrate dehydrogenase kinase/phosphatase (603 aa).

Residues 327-333 (APGIKGL) and Lys-348 contribute to the ATP site. The active site involves Asp-383.

Belongs to the AceK family.

Its subcellular location is the cytoplasm. The enzyme catalyses L-seryl-[isocitrate dehydrogenase] + ATP = O-phospho-L-seryl-[isocitrate dehydrogenase] + ADP + H(+). Its function is as follows. Bifunctional enzyme which can phosphorylate or dephosphorylate isocitrate dehydrogenase (IDH) on a specific serine residue. This is a regulatory mechanism which enables bacteria to bypass the Krebs cycle via the glyoxylate shunt in response to the source of carbon. When bacteria are grown on glucose, IDH is fully active and unphosphorylated, but when grown on acetate or ethanol, the activity of IDH declines drastically concomitant with its phosphorylation. The chain is Isocitrate dehydrogenase kinase/phosphatase from Burkholderia mallei (strain ATCC 23344).